A 764-amino-acid polypeptide reads, in one-letter code: Phenylalanine--tRNA ligase beta subunit (764 aa).

Positions 38–148 (CIAPKNVVVG…GELVLGKELH (111 aa)) constitute a tRNA-binding domain. One can recognise a B5 domain in the interval 375 to 455 (LKDCALTFQL…RFVGIDNLVS (81 aa)). Residues Asp-433, Asp-439, Glu-442, and Glu-443 each coordinate Mg(2+). One can recognise an FDX-ACB domain in the interval 673 to 763 (SIYPSSVRDL…LEKEFNARLK (91 aa)).

Belongs to the phenylalanyl-tRNA synthetase beta subunit family. Type 1 subfamily. As to quaternary structure, tetramer of two alpha and two beta subunits. Mg(2+) is required as a cofactor.

It localises to the cytoplasm. The catalysed reaction is tRNA(Phe) + L-phenylalanine + ATP = L-phenylalanyl-tRNA(Phe) + AMP + diphosphate + H(+). The protein is Phenylalanine--tRNA ligase beta subunit (pheT) of Helicobacter pylori (strain J99 / ATCC 700824) (Campylobacter pylori J99).